The following is a 553-amino-acid chain: Phosphoenolpyruvate carboxykinase (ATP) (553 aa).

The segment at M1 to T22 is disordered. ATP is bound at residue G255–T262.

This sequence belongs to the phosphoenolpyruvate carboxykinase (ATP) family.

The enzyme catalyses oxaloacetate + ATP = phosphoenolpyruvate + ADP + CO2. The protein operates within carbohydrate biosynthesis; gluconeogenesis. The protein is Phosphoenolpyruvate carboxykinase (ATP) (PCK1) of Candida albicans (Yeast).